The chain runs to 209 residues: Large ribosomal subunit protein uL3 (209 aa).

Positions 127 to 151 are disordered; that stretch reads SGGPSSHGSKFHRHLGGTGQATTPA.

Belongs to the universal ribosomal protein uL3 family. In terms of assembly, part of the 50S ribosomal subunit. Forms a cluster with proteins L14 and L19.

Its function is as follows. One of the primary rRNA binding proteins, it binds directly near the 3'-end of the 23S rRNA, where it nucleates assembly of the 50S subunit. This chain is Large ribosomal subunit protein uL3, found in Borrelia turicatae (strain 91E135).